Consider the following 864-residue polypeptide: Leukocyte tyrosine kinase receptor (864 aa).

Residues 1–16 form the signal peptide; that stretch reads MGCWGQLLVWFGAAGA. Over 17–424 the chain is Extracellular; the sequence is ILCSSPGSQE…CMDLHKPPGP (408 aa). Low complexity predominate over residues 30–40; the sequence is RSSPLPLASPS. Positions 30–64 are disordered; the sequence is RSSPLPLASPSPRDPKVSAPPSILEPASPLNSPGT. 2 cysteine pairs are disulfide-bonded: Cys-73–Cys-86 and Cys-168–Cys-179. A disordered region spans residues 239–297; sequence YLRPRDRGRTQASPEKLENRSEAPGSGGRGGAAGGGGGWTSRAPSPQAGRSLQEGAEGG. A compositionally biased stretch (basic and acidic residues) spans 241–259; it reads RPRDRGRTQASPEKLENRS. A glycan (N-linked (GlcNAc...) asparagine) is linked at Asn-257. A compositionally biased stretch (gly residues) spans 263–277; that stretch reads GSGGRGGAAGGGGGW. A disulfide bond links Cys-300 and Cys-322. N-linked (GlcNAc...) asparagine glycans are attached at residues Asn-380 and Asn-412. The chain crosses the membrane as a helical span at residues 425–449; sequence LVLMVAVVATSTLSLLMVCGVLILV. The Cytoplasmic portion of the chain corresponds to 450 to 864; the sequence is KQKKWQGLQE…QNLWNPTYRS (415 aa). Positions 510-786 constitute a Protein kinase domain; the sequence is VTLLRALGHG…LQYCTQDPDV (277 aa). ATP contacts are provided by residues 516–524 and Lys-544; that span reads LGHGAFGEV. Residue Asp-643 is the Proton acceptor of the active site. Phosphotyrosine; by autocatalysis is present on Tyr-676. Disordered regions lie at residues 790–830 and 842–864; these read LLPM…KLKS and SGLK…TYRS. A compositionally biased stretch (polar residues) spans 852-864; that stretch reads LQPQNLWNPTYRS.

The protein belongs to the protein kinase superfamily. Tyr protein kinase family. Insulin receptor subfamily. Homodimer; homodimerizes following ligand-binding. Part of a complex including LTK, TNK2 and GRB2, in which GRB2 promotes LTK recruitment by TNK2. Post-translationally, phosphorylated at tyrosine residues by autocatalysis, which activates kinase activity. Expressed in non-hematopoietic cell lines and T- and B-cell lines.

It is found in the cell membrane. The enzyme catalyses L-tyrosyl-[protein] + ATP = O-phospho-L-tyrosyl-[protein] + ADP + H(+). With respect to regulation, activated by ligand-binding, leading to homodimerization and autophosphorylation. In terms of biological role, receptor with a tyrosine-protein kinase activity. Following activation by ALKAL1 or ALKAL2 ligands at the cell surface, transduces an extracellular signal into an intracellular response. Ligand-binding to the extracellular domain induces tyrosine kinase activation, leading to activation of the mitogen-activated protein kinase (MAPK) pathway. Phosphorylates almost exclusively at the first tyrosine of the Y-x-x-x-Y-Y motif. The exact function of this protein is not known; studies with chimeric proteins demonstrate its ability to promote growth and specifically neurite outgrowth, and cell survival. Involved in regulation of the secretory pathway involving endoplasmic reticulum (ER) export sites (ERESs) and ER to Golgi transport. The sequence is that of Leukocyte tyrosine kinase receptor from Homo sapiens (Human).